The primary structure comprises 279 residues: MAASQTFPLGPTHEPASALMEPLPCTRSLAEGFLEEELRLNAELSQLQFPEPVGVIYNPVDYAWEPHRNYVTRYCQGPKEVLFLGMNPGPFGMAQTGVPFGEVNVVRDWLGVGGPVLTPPQEHPKRPVLGLECPQSEVSGARFWGFFRTLCGQPQVFFRHCFVHNLCPLLFLAPSGRNLTPAELPAKQREQLLSICDAALCRQVQLLGVRLVVGVGRLAEQRARRALAGLTPEVQVEGLLHPSPRSAQANKGWEAAARERLQELGLLPLLTDEGSARPT.

Substrate contacts are provided by methionine 86, phenylalanine 100, and asparagine 165. The DNA-binding stretch occupies residues 175–189 (SGRNLTPAELPAKQR). Residue histidine 241 participates in substrate binding.

It belongs to the uracil-DNA glycosylase (UDG) superfamily. SMUG1 family.

Its subcellular location is the nucleus. In terms of biological role, recognizes base lesions in the genome and initiates base excision DNA repair. Acts as a monofunctional DNA glycosylase specific for uracil (U) residues in DNA with a preference for single-stranded DNA substrates. The activity is greater toward mismatches (U/G) compared to matches (U/A). Excises uracil (U), 5-formyluracil (fU) and uracil derivatives bearing an oxidized group at C5 [5-hydroxyuracil (hoU) and 5-hydroxymethyluracil (hmU)] in ssDNA and dsDNA, but not analogous cytosine derivatives (5-hydroxycytosine and 5-formylcytosine), nor other oxidized bases. The activity is damage-specific and salt-dependent. The substrate preference is the following: ssDNA &gt; dsDNA (G pair) = dsDNA (A pair) at low salt concentration, and dsDNA (G pair) &gt; dsDNA (A pair) &gt; ssDNA at high salt concentration. This Mus musculus (Mouse) protein is Single-strand selective monofunctional uracil DNA glycosylase (Smug1).